The following is a 481-amino-acid chain: Tryptophan 5-hydroxylase (481 aa).

One can recognise an ACT domain in the interval 56–131; it reads SVIFSLKNEI…NVISMSPPEN (76 aa). The L-tryptophan site is built by Tyr272, Arg294, and Thr302. Fe cation contacts are provided by His309, His314, and Glu354. L-tryptophan is bound by residues Ser373 and Ile403.

It belongs to the biopterin-dependent aromatic amino acid hydroxylase family. As to quaternary structure, homotetramer. Fe(2+) serves as cofactor.

The catalysed reaction is (6R)-L-erythro-5,6,7,8-tetrahydrobiopterin + L-tryptophan + O2 = 5-hydroxy-L-tryptophan + (4aS,6R)-4a-hydroxy-L-erythro-5,6,7,8-tetrahydrobiopterin. It functions in the pathway aromatic compound metabolism; serotonin biosynthesis; serotonin from L-tryptophan: step 1/2. Oxidizes L-tryptophan to 5-hydroxy-l-tryptophan in the rate-determining step of serotonin biosynthesis. This chain is Tryptophan 5-hydroxylase (tph1), found in Xenopus laevis (African clawed frog).